A 78-amino-acid polypeptide reads, in one-letter code: Probable Fe(2+)-trafficking protein (78 aa).

Belongs to the Fe(2+)-trafficking protein family. As to quaternary structure, monomer.

Functionally, could be a mediator in iron transactions between iron acquisition and iron-requiring processes, such as synthesis and/or repair of Fe-S clusters in biosynthetic enzymes. This Wigglesworthia glossinidia brevipalpis protein is Probable Fe(2+)-trafficking protein.